Here is a 208-residue protein sequence, read N- to C-terminus: High frequency lysogenization protein HflD homolog (208 aa).

Belongs to the HflD family.

It is found in the cytoplasm. It localises to the cell inner membrane. In Photorhabdus laumondii subsp. laumondii (strain DSM 15139 / CIP 105565 / TT01) (Photorhabdus luminescens subsp. laumondii), this protein is High frequency lysogenization protein HflD homolog.